Reading from the N-terminus, the 275-residue chain is Large ribosomal subunit protein uL2 (275 aa).

Disordered stretches follow at residues 222–243 (GSVMNPTDHPHGGGEGRAPIGR) and 256–275 (GGKTRRKKPSDNMIVRKRKP).

The protein belongs to the universal ribosomal protein uL2 family. As to quaternary structure, part of the 50S ribosomal subunit. Forms a bridge to the 30S subunit in the 70S ribosome.

Functionally, one of the primary rRNA binding proteins. Required for association of the 30S and 50S subunits to form the 70S ribosome, for tRNA binding and peptide bond formation. It has been suggested to have peptidyltransferase activity; this is somewhat controversial. Makes several contacts with the 16S rRNA in the 70S ribosome. In Syntrophomonas wolfei subsp. wolfei (strain DSM 2245B / Goettingen), this protein is Large ribosomal subunit protein uL2.